Here is a 198-residue protein sequence, read N- to C-terminus: ATP-dependent Clp protease proteolytic subunit (198 aa).

Residue serine 98 is the Nucleophile of the active site. Histidine 123 is an active-site residue.

The protein belongs to the peptidase S14 family. As to quaternary structure, fourteen ClpP subunits assemble into 2 heptameric rings which stack back to back to give a disk-like structure with a central cavity, resembling the structure of eukaryotic proteasomes.

It localises to the cytoplasm. It carries out the reaction Hydrolysis of proteins to small peptides in the presence of ATP and magnesium. alpha-casein is the usual test substrate. In the absence of ATP, only oligopeptides shorter than five residues are hydrolyzed (such as succinyl-Leu-Tyr-|-NHMec, and Leu-Tyr-Leu-|-Tyr-Trp, in which cleavage of the -Tyr-|-Leu- and -Tyr-|-Trp bonds also occurs).. Its function is as follows. Cleaves peptides in various proteins in a process that requires ATP hydrolysis. Has a chymotrypsin-like activity. Plays a major role in the degradation of misfolded proteins. The sequence is that of ATP-dependent Clp protease proteolytic subunit from Halothermothrix orenii (strain H 168 / OCM 544 / DSM 9562).